The chain runs to 287 residues: 4-hydroxybenzoate octaprenyltransferase (287 aa).

Helical transmembrane passes span 41-61, 89-109, 133-153, 158-178, 218-238, and 267-287; these read WPLI…GCAM, WEAV…ILPL, FFAI…PMAF, NTVP…SIAY, LGIY…WVGW, and NNWL…MAGS.

Belongs to the UbiA prenyltransferase family. Mg(2+) is required as a cofactor.

It localises to the cell inner membrane. It carries out the reaction all-trans-octaprenyl diphosphate + 4-hydroxybenzoate = 4-hydroxy-3-(all-trans-octaprenyl)benzoate + diphosphate. It participates in cofactor biosynthesis; ubiquinone biosynthesis. Functionally, catalyzes the prenylation of para-hydroxybenzoate (PHB) with an all-trans polyprenyl group. Mediates the second step in the final reaction sequence of ubiquinone-8 (UQ-8) biosynthesis, which is the condensation of the polyisoprenoid side chain with PHB, generating the first membrane-bound Q intermediate 3-octaprenyl-4-hydroxybenzoate. The protein is 4-hydroxybenzoate octaprenyltransferase of Burkholderia multivorans (strain ATCC 17616 / 249).